Consider the following 167-residue polypeptide: Large ribosomal subunit protein bL9 (167 aa).

The protein belongs to the bacterial ribosomal protein bL9 family.

Its function is as follows. Binds to the 23S rRNA. The protein is Large ribosomal subunit protein bL9 of Nitratidesulfovibrio vulgaris (strain ATCC 29579 / DSM 644 / CCUG 34227 / NCIMB 8303 / VKM B-1760 / Hildenborough) (Desulfovibrio vulgaris).